Consider the following 250-residue polypeptide: 3-deoxy-manno-octulosonate cytidylyltransferase (250 aa).

The protein belongs to the KdsB family.

It is found in the cytoplasm. The catalysed reaction is 3-deoxy-alpha-D-manno-oct-2-ulosonate + CTP = CMP-3-deoxy-beta-D-manno-octulosonate + diphosphate. It functions in the pathway nucleotide-sugar biosynthesis; CMP-3-deoxy-D-manno-octulosonate biosynthesis; CMP-3-deoxy-D-manno-octulosonate from 3-deoxy-D-manno-octulosonate and CTP: step 1/1. Its pathway is bacterial outer membrane biogenesis; lipopolysaccharide biosynthesis. In terms of biological role, activates KDO (a required 8-carbon sugar) for incorporation into bacterial lipopolysaccharide in Gram-negative bacteria. The protein is 3-deoxy-manno-octulosonate cytidylyltransferase of Pectobacterium carotovorum subsp. carotovorum (strain PC1).